A 426-amino-acid polypeptide reads, in one-letter code: Cytochrome c biogenesis protein CcsB (426 aa).

3 helical membrane-spanning segments follow: residues 14 to 34 (LKIA…GTLI), 72 to 92 (SFWF…CSFR), and 162 to 182 (LGPI…TYGS).

It belongs to the Ccs1/CcsB family. May interact with CcsA.

It is found in the cellular thylakoid membrane. Required during biogenesis of c-type cytochromes (cytochrome c6 and cytochrome f) at the step of heme attachment. This Prochlorococcus marinus (strain NATL1A) protein is Cytochrome c biogenesis protein CcsB.